A 577-amino-acid polypeptide reads, in one-letter code: Maltase A1 (577 aa).

A signal peptide spans 1-19 (MRPQSAACLLLAIVGFVGA). 2 N-linked (GlcNAc...) asparagine glycosylation sites follow: N119 and N151. D221 serves as the catalytic Nucleophile. N244 carries N-linked (GlcNAc...) asparagine glycosylation. E297 (proton donor) is an active-site residue. Residues N315 and N331 are each glycosylated (N-linked (GlcNAc...) asparagine).

This sequence belongs to the glycosyl hydrolase 13 family.

It catalyses the reaction Hydrolysis of terminal, non-reducing (1-&gt;4)-linked alpha-D-glucose residues with release of alpha-D-glucose.. The polypeptide is Maltase A1 (Mal-A1) (Drosophila melanogaster (Fruit fly)).